The sequence spans 263 residues: Inner membrane protein YpjD (263 aa).

The Periplasmic portion of the chain corresponds to 1-3 (MPV). A helical transmembrane segment spans residues 4 to 23 (FALLALVAYSVSLALIVPGL). Residues 24-34 (LQKNGGWRRMA) lie on the Cytoplasmic side of the membrane. The chain crosses the membrane as a helical span at residues 35 to 54 (IISAVIALVCHAIALEARIL). Topologically, residues 55–63 (PDGDSGQNL) are periplasmic. Residues 64-83 (SLLNVGSLVSLMICTVMTIV) form a helical membrane-spanning segment. Residues 84 to 89 (ASRNRG) are Cytoplasmic-facing. Residues 90-109 (WLLLPIVYAFALINLALATF) form a helical membrane-spanning segment. Residues 110–123 (MPNEYITHLEATPG) are Periplasmic-facing. Residues 124–146 (MLVHIGLSLFSYATLIIAALYAL) form a helical membrane-spanning segment. At 147–181 (QLAWIDYQLKNKKLAFNQEMPPLMSIERKMFHITQ) the chain is on the cytoplasmic side. Residues 182–201 (IGVVLLTLTLCTGLFYMHNL) traverse the membrane as a helical segment. Topologically, residues 202 to 210 (FSMENIDKA) are periplasmic. A helical transmembrane segment spans residues 211 to 228 (VLSIVAWFVYIVLLWGHY). The Cytoplasmic portion of the chain corresponds to 229–236 (HEGWRGRR). Residues 237–259 (VVWFNVAGAVILTLAYFGSRIVQ) form a helical membrane-spanning segment. The Periplasmic portion of the chain corresponds to 260–263 (QLIS).

The protein localises to the cell inner membrane. This is Inner membrane protein YpjD (ypjD) from Escherichia coli O157:H7.